The chain runs to 1105 residues: Carbamoyl phosphate synthase large chain (1105 aa).

Positions 1 to 402 (MPKRDDIEKV…ALGKAVRSLE (402 aa)) are carboxyphosphate synthetic domain. Residues R129, R169, G175, G176, K208, V210, E215, G241, I242, H243, Q285, and E299 each coordinate ATP. The ATP-grasp 1 domain maps to 133–328 (KTAMKNCGLE…IAKISALLAV (196 aa)). Residues Q285, E299, and N301 each coordinate Mg(2+). Mn(2+) is bound by residues Q285, E299, and N301. An oligomerization domain region spans residues 403 to 542 (LDIAPKLDLR…STYNGMENET (140 aa)). Positions 543 to 945 (IPSKRRKIMV…AFAKAQLSAD (403 aa)) are carbamoyl phosphate synthetic domain. The ATP-grasp 2 domain occupies 667-858 (AKFLKQSGLS…VAKIAAKTII (192 aa)). ATP contacts are provided by R703, K742, L744, E749, G774, I775, H776, S777, Q817, and E829. Mg(2+)-binding residues include Q817, E829, and N831. Mn(2+) contacts are provided by Q817, E829, and N831. The region spanning 940-1101 (AQLSADGIST…QDIFYAQQNT (162 aa)) is the MGS-like domain. Residues 946-1105 (GISTKSLLVT…YAQQNTLLKK (160 aa)) form an allosteric domain region.

This sequence belongs to the CarB family. In terms of assembly, composed of two chains; the small (or glutamine) chain promotes the hydrolysis of glutamine to ammonia, which is used by the large (or ammonia) chain to synthesize carbamoyl phosphate. Tetramer of heterodimers (alpha,beta)4. Mg(2+) is required as a cofactor. Requires Mn(2+) as cofactor.

The catalysed reaction is hydrogencarbonate + L-glutamine + 2 ATP + H2O = carbamoyl phosphate + L-glutamate + 2 ADP + phosphate + 2 H(+). It catalyses the reaction hydrogencarbonate + NH4(+) + 2 ATP = carbamoyl phosphate + 2 ADP + phosphate + 2 H(+). The protein operates within amino-acid biosynthesis; L-arginine biosynthesis; carbamoyl phosphate from bicarbonate: step 1/1. It functions in the pathway pyrimidine metabolism; UMP biosynthesis via de novo pathway; (S)-dihydroorotate from bicarbonate: step 1/3. Large subunit of the glutamine-dependent carbamoyl phosphate synthetase (CPSase). CPSase catalyzes the formation of carbamoyl phosphate from the ammonia moiety of glutamine, carbonate, and phosphate donated by ATP, constituting the first step of 2 biosynthetic pathways, one leading to arginine and/or urea and the other to pyrimidine nucleotides. The large subunit (synthetase) binds the substrates ammonia (free or transferred from glutamine from the small subunit), hydrogencarbonate and ATP and carries out an ATP-coupled ligase reaction, activating hydrogencarbonate by forming carboxy phosphate which reacts with ammonia to form carbamoyl phosphate. The protein is Carbamoyl phosphate synthase large chain of Pseudothermotoga lettingae (strain ATCC BAA-301 / DSM 14385 / NBRC 107922 / TMO) (Thermotoga lettingae).